The chain runs to 331 residues: Ketol-acid reductoisomerase (NADP(+)) (331 aa).

The region spanning 2–182 is the KARI N-terminal Rossmann domain; it reads ARMYYDADAN…GGTRGGILET (181 aa). NADP(+) is bound by residues 25–28, S51, S53, and 83–86; these read YGSQ and DDVQ. H108 is a catalytic residue. G134 is a binding site for NADP(+). The 146-residue stretch at 183–328 folds into the KARI C-terminal knotted domain; the sequence is TFREETETDL…KDLRAMFSWL (146 aa). Residues D191, E195, E227, and E231 each contribute to the Mg(2+) site. A substrate-binding site is contributed by S252.

The protein belongs to the ketol-acid reductoisomerase family. Requires Mg(2+) as cofactor.

It carries out the reaction (2R)-2,3-dihydroxy-3-methylbutanoate + NADP(+) = (2S)-2-acetolactate + NADPH + H(+). The enzyme catalyses (2R,3R)-2,3-dihydroxy-3-methylpentanoate + NADP(+) = (S)-2-ethyl-2-hydroxy-3-oxobutanoate + NADPH + H(+). The protein operates within amino-acid biosynthesis; L-isoleucine biosynthesis; L-isoleucine from 2-oxobutanoate: step 2/4. Its pathway is amino-acid biosynthesis; L-valine biosynthesis; L-valine from pyruvate: step 2/4. In terms of biological role, involved in the biosynthesis of branched-chain amino acids (BCAA). Catalyzes an alkyl-migration followed by a ketol-acid reduction of (S)-2-acetolactate (S2AL) to yield (R)-2,3-dihydroxy-isovalerate. In the isomerase reaction, S2AL is rearranged via a Mg-dependent methyl migration to produce 3-hydroxy-3-methyl-2-ketobutyrate (HMKB). In the reductase reaction, this 2-ketoacid undergoes a metal-dependent reduction by NADPH to yield (R)-2,3-dihydroxy-isovalerate. This chain is Ketol-acid reductoisomerase (NADP(+)), found in Picosynechococcus sp. (strain ATCC 27264 / PCC 7002 / PR-6) (Agmenellum quadruplicatum).